Here is an 86-residue protein sequence, read N- to C-terminus: Cytochrome c oxidase subunit 12, mitochondrial (86 aa).

The region spanning 30–73 (TKHCFQSYIDYFRCIKAKGEDFVPCKQFWHAYQSLCPMEWVERW) is the CHCH domain. A Cx9C motif motif is present at residues 33-43 (CFQSYIDYFRC). Intrachain disulfides connect C33–C65 and C43–C54. Positions 54–65 (CKQFWHAYQSLC) match the Cx10C motif motif.

Belongs to the cytochrome c oxidase subunit 6B family. Component of the cytochrome c oxidase (complex IV, CIV), a multisubunit enzyme composed of a catalytic core of 3 subunits and several supernumerary subunits. The complex exists as a monomer or a dimer and forms supercomplexes (SCs) in the inner mitochondrial membrane with ubiquinol-cytochrome c oxidoreductase (cytochrome b-c1 complex, complex III, CIII).

The protein resides in the mitochondrion inner membrane. It participates in energy metabolism; oxidative phosphorylation. In terms of biological role, component of the cytochrome c oxidase, the last enzyme in the mitochondrial electron transport chain which drives oxidative phosphorylation. The respiratory chain contains 3 multisubunit complexes succinate dehydrogenase (complex II, CII), ubiquinol-cytochrome c oxidoreductase (cytochrome b-c1 complex, complex III, CIII) and cytochrome c oxidase (complex IV, CIV), that cooperate to transfer electrons derived from NADH and succinate to molecular oxygen, creating an electrochemical gradient over the inner membrane that drives transmembrane transport and the ATP synthase. Cytochrome c oxidase is the component of the respiratory chain that catalyzes the reduction of oxygen to water. Electrons originating from reduced cytochrome c in the intermembrane space (IMS) are transferred via the dinuclear copper A center (CU(A)) of subunit 2 and heme A of subunit 1 to the active site in subunit 1, a binuclear center (BNC) formed by heme A3 and copper B (CU(B)). The BNC reduces molecular oxygen to 2 water molecules using 4 electrons from cytochrome c in the IMS and 4 protons from the mitochondrial matrix. In Schizosaccharomyces pombe (strain 972 / ATCC 24843) (Fission yeast), this protein is Cytochrome c oxidase subunit 12, mitochondrial (cox12).